The sequence spans 319 residues: tRNA U34 carboxymethyltransferase (319 aa).

Residues K88, W102, K107, G126, 176 to 177 (LE), M192, Y196, and R311 each bind carboxy-S-adenosyl-L-methionine.

This sequence belongs to the class I-like SAM-binding methyltransferase superfamily. CmoB family. As to quaternary structure, homotetramer.

The catalysed reaction is carboxy-S-adenosyl-L-methionine + 5-hydroxyuridine(34) in tRNA = 5-carboxymethoxyuridine(34) in tRNA + S-adenosyl-L-homocysteine + H(+). Its function is as follows. Catalyzes carboxymethyl transfer from carboxy-S-adenosyl-L-methionine (Cx-SAM) to 5-hydroxyuridine (ho5U) to form 5-carboxymethoxyuridine (cmo5U) at position 34 in tRNAs. The chain is tRNA U34 carboxymethyltransferase from Azotobacter vinelandii (strain DJ / ATCC BAA-1303).